The chain runs to 230 residues: Octanoyltransferase (230 aa).

One can recognise a BPL/LPL catalytic domain in the interval 38 to 215 (AGGADTLLLL…AVCAALDGVL (178 aa)). Residues 76–83 (RGGKITWH), 145–147 (AIG), and 158–160 (GFA) each bind substrate. The active-site Acyl-thioester intermediate is cysteine 176.

The protein belongs to the LipB family.

It is found in the cytoplasm. The enzyme catalyses octanoyl-[ACP] + L-lysyl-[protein] = N(6)-octanoyl-L-lysyl-[protein] + holo-[ACP] + H(+). It functions in the pathway protein modification; protein lipoylation via endogenous pathway; protein N(6)-(lipoyl)lysine from octanoyl-[acyl-carrier-protein]: step 1/2. Functionally, catalyzes the transfer of endogenously produced octanoic acid from octanoyl-acyl-carrier-protein onto the lipoyl domains of lipoate-dependent enzymes. Lipoyl-ACP can also act as a substrate although octanoyl-ACP is likely to be the physiological substrate. The chain is Octanoyltransferase from Mycobacterium bovis (strain BCG / Tokyo 172 / ATCC 35737 / TMC 1019).